The primary structure comprises 2380 residues: Probable polyketide synthase 25 (2380 aa).

Over residues 1–18 the composition is skewed to polar residues; it reads MDNSYLNNPQFDINNGNK. The tract at residues 1–29 is disordered; it reads MDNSYLNNPQFDINNGNKEVTDDDNNKNN. One can recognise a Ketosynthase family 3 (KS3) domain in the interval 31–457; that stretch reads DNLVAIVGVG…GSNCCLVLSQ (427 aa). Active-site for beta-ketoacyl synthase activity residues include Cys-198, His-340, and His-380. The interval 649–682 is acyl/malonyl transferase; it reads GIKASFMLGHSLGEVTTAYCSGMIDIDQLCYLIY. The For acyl/malonyl transferase activity role is filled by Ser-659. The segment at 948–1070 is N-terminal hotdog fold; the sequence is ISILGNSMQD…ANFQLYNNGK (123 aa). Residues 948–1234 form the PKS/mFAS DH domain; the sequence is ISILGNSMQD…CTSLTPVKDP (287 aa). The active-site Proton acceptor; for dehydratase activity is the His-982. The interval 1085 to 1234 is C-terminal hotdog fold; the sequence is NLSSIPWDKF…CTSLTPVKDP (150 aa). Asp-1148 acts as the Proton donor; for dehydratase activity in catalysis. In terms of domain architecture, Carrier spans 2299-2376; sequence KNSTNIKDKF…MVCQIINDNF (78 aa). The residue at position 2336 (Ser-2336) is an O-(pantetheine 4'-phosphoryl)serine.

It depends on pantetheine 4'-phosphate as a cofactor.

Probable polyketide synthase. The protein is Probable polyketide synthase 25 (pks25) of Dictyostelium discoideum (Social amoeba).